Reading from the N-terminus, the 260-residue chain is UPF0246 protein SCO2297 (260 aa).

Belongs to the UPF0246 family.

The protein is UPF0246 protein SCO2297 of Streptomyces coelicolor (strain ATCC BAA-471 / A3(2) / M145).